We begin with the raw amino-acid sequence, 549 residues long: Eukaryotic translation initiation factor 3 subunit D (549 aa).

Residues 101–130 (QSYQRGRARGQRGRGARGARTPGGMTTLNK) are disordered. Residues 106–117 (GRARGQRGRGAR) are compositionally biased toward basic residues. Residues 277–291 (EFDLLTVNETSVEPP) are RNA gate. Residues 521–549 (ESDASEESGDEQADTPFAPLYSYGNSKRV) are disordered. Residues 523–533 (DASEESGDEQA) show a composition bias toward acidic residues.

It belongs to the eIF-3 subunit D family. Component of the eukaryotic translation initiation factor 3 (eIF-3) complex.

Its subcellular location is the cytoplasm. In terms of biological role, mRNA cap-binding component of the eukaryotic translation initiation factor 3 (eIF-3) complex, which is involved in protein synthesis of a specialized repertoire of mRNAs and, together with other initiation factors, stimulates binding of mRNA and methionyl-tRNAi to the 40S ribosome. The eIF-3 complex specifically targets and initiates translation of a subset of mRNAs involved in cell proliferation. In the eIF-3 complex, eif3d specifically recognizes and binds the 7-methylguanosine cap of a subset of mRNAs. This is Eukaryotic translation initiation factor 3 subunit D from Bombyx mori (Silk moth).